We begin with the raw amino-acid sequence, 50 residues long: Large ribosomal subunit protein bL33 (50 aa).

Belongs to the bacterial ribosomal protein bL33 family.

This chain is Large ribosomal subunit protein bL33, found in Solibacter usitatus (strain Ellin6076).